Here is a 138-residue protein sequence, read N- to C-terminus: NADH-quinone oxidoreductase subunit A (138 aa).

3 helical membrane passes run 8 to 28, 63 to 83, and 93 to 113; these read FGAV…GYLT, FYVV…LFPW, and FALI…AYAW.

The protein belongs to the complex I subunit 3 family. NDH-1 is composed of 14 different subunits. Subunits NuoA, H, J, K, L, M, N constitute the membrane sector of the complex.

The protein localises to the cell inner membrane. It carries out the reaction a quinone + NADH + 5 H(+)(in) = a quinol + NAD(+) + 4 H(+)(out). Its function is as follows. NDH-1 shuttles electrons from NADH, via FMN and iron-sulfur (Fe-S) centers, to quinones in the respiratory chain. The immediate electron acceptor for the enzyme in this species is believed to be a menaquinone. Couples the redox reaction to proton translocation (for every two electrons transferred, four hydrogen ions are translocated across the cytoplasmic membrane), and thus conserves the redox energy in a proton gradient. The protein is NADH-quinone oxidoreductase subunit A of Prosthecochloris aestuarii (strain DSM 271 / SK 413).